Consider the following 683-residue polypeptide: 1,4-alpha-glucan-branching enzyme (683 aa).

(1,4-alpha-D-glucosyl)n is bound by residues Trp-92 and Lys-127. Asp-342 serves as the catalytic Nucleophile. Residue Glu-397 is the Proton donor of the active site.

It belongs to the glycosyl hydrolase 13 family. GlgB subfamily.

It localises to the cytoplasm. The catalysed reaction is Transfers a segment of a (1-&gt;4)-alpha-D-glucan chain to a primary hydroxy group in a similar glucan chain.. The protein operates within glycan biosynthesis; glycogen biosynthesis. Functionally, glycogen-branching enzyme participates in the glycogen biosynthetic process along with glycogenin and glycogen synthase. Generates alpha-1,6-glucosidic branches from alpha-1,4-linked glucose chains, to increase solubility of the glycogen polymer. The polypeptide is 1,4-alpha-glucan-branching enzyme (GLC3) (Rhizophagus irregularis (strain DAOM 181602 / DAOM 197198 / MUCL 43194) (Arbuscular mycorrhizal fungus)).